The following is a 328-amino-acid chain: MYVPDVAEDLCLDIFHKQKQVISRYFANFHCDVVRQLTERLLCHQGAVFFSGIGKSGCIARKLVATMQSFGEKAFFLSGDLLHGDLGVVSSGDIVCLFSNSGETREILEWIPHLKNRQVFLVGITSSPCSSLAVFSDFVVMLPKLEELDPFNLIPTTSTTCQLLFSDLLAMTVLRCRKISLSDYGKNHPSGQIGLKANGKVRDYLSPRTEVPFCSPSITVSEALTVLSSYGYGCVCVVNEQFELLGIFTDGDLRRGLSECGGAILECPLEQVMTRKPKVISEDSDVLLGLEMMESGNPVTVLPVVDAQHQRFIVGLLHMHTLARAGLL.

The region spanning L37–I179 is the SIS domain. Position 52-57 (G52–G57) interacts with ATP. 2 CBS domains span residues L205–I264 and M273–L328.

Belongs to the SIS family. GutQ/KpsF subfamily.

This is an uncharacterized protein from Chlamydia muridarum (strain MoPn / Nigg).